Consider the following 493-residue polypeptide: Cytoplasmic tRNA 2-thiolation protein 2 (493 aa).

Ser-489 is subject to Phosphoserine.

The protein belongs to the CTU2/NCS2 family. Interacts with NCS6 and URM1. May act by forming a heterodimer with NCS6.

Its subcellular location is the cytoplasm. Its pathway is tRNA modification; 5-methoxycarbonylmethyl-2-thiouridine-tRNA biosynthesis. In terms of biological role, plays a central role in 2-thiolation of mcm(5)S(2)U at tRNA wobble positions of tRNA(Lys), tRNA(Glu) and tRNA(Gln). May act by forming a heterodimer with NCS6 that ligates sulfur from thiocarboxylated URM1 onto the uridine of tRNAs at wobble position. Prior mcm(5) tRNA modification by the elongator complex is required for 2-thiolation. May also be involved in protein urmylation. The polypeptide is Cytoplasmic tRNA 2-thiolation protein 2 (Saccharomyces cerevisiae (strain RM11-1a) (Baker's yeast)).